The primary structure comprises 392 residues: Cyclic AMP receptor 1 (392 aa).

Residues 1–13 (MGLLDGNPANETS) are Extracellular-facing. N-linked (GlcNAc...) asparagine glycosylation occurs at N10. The helical transmembrane segment at 14–33 (LVLLLFADFSSMLGCMAVLI) threads the bilayer. The Cytoplasmic segment spans residues 34 to 47 (GFWRLKLLRNHVTK). Residues 48-68 (VIACFCATSFCKDFPSTILTL) form a helical membrane-spanning segment. The Extracellular segment spans residues 69-83 (TNTAVNGGFPCYLYA). The chain crosses the membrane as a helical span at residues 84-109 (IVITYGSFACWLWTLCLAISIYMLIV). Residues 110-120 (KREPEPERFEK) lie on the Cytoplasmic side of the membrane. The helical transmembrane segment at 121 to 139 (YYYLLCWGLPLISTIVMLA) threads the bilayer. Over 140–162 (KNTVQFVGNWCWIGVSFTGYRFG) the chain is Extracellular. A helical transmembrane segment spans residues 163–181 (LFYGPFLFIWAISAVLVGL). Over 182-205 (TSRYTYVVIHNGVSDNKEKHLTYQ) the chain is Cytoplasmic. Residues 206-224 (FKLINYIIVFLVCWVFAVV) form a helical membrane-spanning segment. Over 225–235 (NRIVNGLNMFP) the chain is Extracellular. Residues 236-260 (PALNILHTYLSVSHGFWASVTFIYN) traverse the membrane as a helical segment. The Cytoplasmic segment spans residues 261–392 (NPLMWRYFGA…STSTNGQGNN (132 aa)). Disordered stretches follow at residues 292–324 (NKNNNNPSPYSSSRGTSGKTMGGHPTGDDVQCS) and 339–392 (VNNQ…QGNN). Polar residues predominate over residues 298–310 (PSPYSSSRGTSGK). Phosphoserine is present on residues S299, S302, S303, S304, S308, S360, S361, S362, S363, S364, S366, S367, and S368. Residues 340 to 367 (NNQQNLNNNYGLQQNYNDEGSSSSSLSS) are compositionally biased toward low complexity. Polar residues predominate over residues 375–392 (VEMQNIQISTSTNGQGNN).

Belongs to the G-protein coupled receptor 5 family. In terms of processing, C-terminal Ser or Thr residues may be phosphorylated.

It localises to the membrane. Functionally, receptor for cAMP. Coordinates the aggregation of individual cells into a multicellular organism and regulates the expression of a large number of developmentally regulated genes. The activity of this receptor is mediated by G proteins. This is Cyclic AMP receptor 1 (carA-1) from Dictyostelium discoideum (Social amoeba).